The primary structure comprises 116 residues: Ribosome-binding factor A (116 aa).

This sequence belongs to the RbfA family. As to quaternary structure, monomer. Binds 30S ribosomal subunits, but not 50S ribosomal subunits or 70S ribosomes.

It localises to the cytoplasm. Functionally, one of several proteins that assist in the late maturation steps of the functional core of the 30S ribosomal subunit. Associates with free 30S ribosomal subunits (but not with 30S subunits that are part of 70S ribosomes or polysomes). Required for efficient processing of 16S rRNA. May interact with the 5'-terminal helix region of 16S rRNA. The sequence is that of Ribosome-binding factor A from Streptococcus pneumoniae (strain ATCC BAA-255 / R6).